Consider the following 77-residue polypeptide: UPF0401 protein c3666 (77 aa).

It belongs to the UPF0401 family.

The polypeptide is UPF0401 protein c3666 (Escherichia coli O6:H1 (strain CFT073 / ATCC 700928 / UPEC)).